We begin with the raw amino-acid sequence, 496 residues long: Galactose-1-phosphate uridylyltransferase (496 aa).

The protein belongs to the galactose-1-phosphate uridylyltransferase type 2 family.

The protein localises to the cytoplasm. The catalysed reaction is alpha-D-galactose 1-phosphate + UDP-alpha-D-glucose = alpha-D-glucose 1-phosphate + UDP-alpha-D-galactose. It functions in the pathway carbohydrate metabolism; galactose metabolism. This chain is Galactose-1-phosphate uridylyltransferase, found in Staphylococcus saprophyticus subsp. saprophyticus (strain ATCC 15305 / DSM 20229 / NCIMB 8711 / NCTC 7292 / S-41).